The primary structure comprises 4588 residues: Protocadherin Fat 1 (4588 aa).

A signal peptide spans 1-21 (MGRHLALLLLLLLLFQHFGDS). Over 22-4181 (DGSQRLEQTP…STPWNIGLAE (4160 aa)) the chain is Extracellular. Cadherin domains follow at residues 35-149 (THLE…RPLF) and 150-257 (SPTS…APVI). Asn40 carries N-linked (GlcNAc...) asparagine glycosylation. The N-linked (GlcNAc...) asparagine glycan is linked to Asn333. Cadherin domains lie at 368–463 (EKDV…PPEF), 464–569 (TQTA…TPLF), 570–673 (EKIN…VNLQ), 718–822 (STLP…PPEF), 823–927 (LQES…PPTF), 928–1034 (IPPN…PPVF), 1035–1139 (SSFV…APQT), 1140–1245 (SEPV…KPQF), 1246–1357 (LQKF…EPIS), 1359–1456 (EESF…RPQF), 1457–1562 (STSK…APWF), 1563–1667 (TASS…SPKF), 1668–1765 (TSKE…APVF), 1766–1879 (MQAE…PPVF), 1880–1979 (AKPL…HLKF), 1980–2081 (TQDV…APVF), 2082–2182 (VNLP…MPVF), 2183–2283 (EKPF…PPVF), 2284–2390 (AQQS…PPLF), 2391–2492 (EQQI…SPAF), 2493–2596 (LQNE…APQF), 2597–2703 (RATK…LPKF), 2704–2809 (SEPF…SPVF), 2810–2918 (ESSP…PPRF), 2919–3023 (TAEI…SPVC), 3024–3125 (EKTL…APEF), 3126–3230 (SADP…PPVF), 3231–3335 (EYRE…TPVF), 3336–3440 (SQDT…APVF), 3441–3545 (SRGN…PPAI), and 3546–3647 (LPLE…AIRF). 3 N-linked (GlcNAc...) asparagine glycosylation sites follow: Asn660, Asn740, and Asn791. The N-linked (GlcNAc...) asparagine glycan is linked to Asn998. Residues Asn1426 and Asn1551 are each glycosylated (N-linked (GlcNAc...) asparagine). N-linked (GlcNAc...) asparagine glycosylation is found at Asn1748, Asn1864, Asn1902, Asn1940, and Asn1991. N-linked (GlcNAc...) asparagine glycosylation is found at Asn2325 and Asn2464. Residues Asn3324, Asn3422, Asn3444, Asn3613, Asn3640, and Asn3716 are each glycosylated (N-linked (GlcNAc...) asparagine). The EGF-like 1 domain occupies 3790-3827 (VHHGCEDDPCPEGSECVSDPWEEKHTCVCPSGRFGQCP). Disulfide bonds link Cys3794/Cys3805, Cys3799/Cys3816, Cys3818/Cys3826, Cys3976/Cys4009, Cys4017/Cys4028, Cys4022/Cys4038, Cys4040/Cys4049, Cys4056/Cys4067, Cys4061/Cys4076, Cys4078/Cys4087, Cys4093/Cys4104, Cys4098/Cys4113, Cys4115/Cys4124, Cys4131/Cys4142, and Cys4136/Cys4151. The region spanning 3829–4009 (SSSMTLTGNS…EESVDVSPGC (181 aa)) is the Laminin G-like domain. EGF-like domains lie at 4013–4050 (ATED…THCE), 4052–4088 (SVNP…QRCQ), and 4089–4125 (LSPY…ERCQ). Residues 4127–4163 (DIDECSGNPCLHGALCENTHGSYHCNCSHEYRGRHCE) enclose the EGF-like 5; calcium-binding domain. Asn4152 carries an N-linked (GlcNAc...) asparagine glycan. Cys4153 and Cys4162 are oxidised to a cystine. Residues 4182-4202 (GIGIVVFVAGIFLLVVVFVLC) form a helical membrane-spanning segment. Residues 4203-4588 (RKMISRKKKH…PLDSQQHTEV (386 aa)) are Cytoplasmic-facing. Residues 4204 to 4214 (KMISRKKKHQA) carry the Nuclear localization signal motif. Disordered stretches follow at residues 4255–4275 (SYTP…SFEG), 4303–4327 (SVAP…QKPS), and 4343–4376 (LSKK…SESC). Positions 4256 to 4265 (YTPSIPSDSR) are enriched in polar residues. A compositionally biased stretch (polar residues) spans 4363–4374 (SEVQSLSSFQSE). The short motif at 4378-4382 (DNGYH) is the PTB-like motif element. Disordered stretches follow at residues 4435–4479 (FPPP…SSSR) and 4565–4588 (ESGD…HTEV).

As to quaternary structure, interacts (via the C-terminus 4300-4400 AA) with ATN1. Interacts with RERE. Post-translationally, undergoes proteolytic cleavage. The extracellular domain is cleaved off and the cytoplasmic domain (about 400 AA) shuttles to the nucleus. As to expression, expressed in many epithelial and some endothelial and smooth muscle cells.

Its subcellular location is the cell membrane. The protein localises to the nucleus. Plays an essential role for cellular polarization, directed cell migration and modulating cell-cell contact. This is Protocadherin Fat 1 (FAT1) from Homo sapiens (Human).